The primary structure comprises 384 residues: 1-deoxy-D-xylulose 5-phosphate reductoisomerase (384 aa).

NADPH is bound by residues threonine 10, glycine 11, serine 12, isoleucine 13, asparagine 38, and asparagine 120. Lysine 121 provides a ligand contact to 1-deoxy-D-xylulose 5-phosphate. Residue glutamate 122 coordinates NADPH. Aspartate 146 is a binding site for Mn(2+). 4 residues coordinate 1-deoxy-D-xylulose 5-phosphate: serine 147, glutamate 148, serine 172, and histidine 195. Glutamate 148 serves as a coordination point for Mn(2+). Residue glycine 201 participates in NADPH binding. 1-deoxy-D-xylulose 5-phosphate contacts are provided by serine 208, asparagine 213, lysine 214, and glutamate 217. Glutamate 217 is a Mn(2+) binding site.

The protein belongs to the DXR family. Mg(2+) serves as cofactor. Mn(2+) is required as a cofactor.

It catalyses the reaction 2-C-methyl-D-erythritol 4-phosphate + NADP(+) = 1-deoxy-D-xylulose 5-phosphate + NADPH + H(+). The protein operates within isoprenoid biosynthesis; isopentenyl diphosphate biosynthesis via DXP pathway; isopentenyl diphosphate from 1-deoxy-D-xylulose 5-phosphate: step 1/6. In terms of biological role, catalyzes the NADPH-dependent rearrangement and reduction of 1-deoxy-D-xylulose-5-phosphate (DXP) to 2-C-methyl-D-erythritol 4-phosphate (MEP). The sequence is that of 1-deoxy-D-xylulose 5-phosphate reductoisomerase from Protochlamydia amoebophila (strain UWE25).